A 463-amino-acid polypeptide reads, in one-letter code: Sugar transporter ERD6-like 7 (463 aa).

A run of 12 helical transmembrane segments spans residues 26-46 (WMVY…GSCA), 69-89 (LFGS…GPIA), 103-123 (AFCV…ALDL), 126-146 (LATG…IAEI), 157-177 (TLNQ…GTLV), 181-201 (VLAL…FFIP), 264-284 (VLIA…GICF), 299-319 (LGMI…APIV), 327-347 (LLLV…VSFY), 357-377 (AVPV…SAGM), 396-416 (VAGG…SYTF), and 426-446 (GTFL…IAIV).

Belongs to the major facilitator superfamily. Sugar transporter (TC 2.A.1.1) family.

It is found in the membrane. Its function is as follows. Sugar transporter. The sequence is that of Sugar transporter ERD6-like 7 from Arabidopsis thaliana (Mouse-ear cress).